A 62-amino-acid chain; its full sequence is Translational regulator CsrA 3 (62 aa).

Belongs to the CsrA/RsmA family. As to quaternary structure, homodimer; the beta-strands of each monomer intercalate to form a hydrophobic core, while the alpha-helices form wings that extend away from the core.

It is found in the cytoplasm. A key translational regulator that binds mRNA to regulate translation initiation and/or mRNA stability. Mediates global changes in gene expression, shifting from rapid growth to stress survival by linking envelope stress, the stringent response and the catabolite repression systems. Usually binds in the 5'-UTR; binding at or near the Shine-Dalgarno sequence prevents ribosome-binding, repressing translation, binding elsewhere in the 5'-UTR can activate translation and/or stabilize the mRNA. Its function is antagonized by small RNA(s). This is Translational regulator CsrA 3 from Pseudomonas syringae pv. tomato (strain ATCC BAA-871 / DC3000).